The following is a 221-amino-acid chain: ATP-dependent dethiobiotin synthetase BioD (221 aa).

Residue 13-18 (DIGKTY) participates in ATP binding. Mg(2+) is bound at residue threonine 17. Residue lysine 38 is part of the active site. Residue serine 42 coordinates substrate. Residues aspartate 51, 112–115 (EGSG), and 176–177 (NR) contribute to the ATP site. Aspartate 51 and glutamate 112 together coordinate Mg(2+).

It belongs to the dethiobiotin synthetase family. As to quaternary structure, homodimer. The cofactor is Mg(2+).

The protein resides in the cytoplasm. It carries out the reaction (7R,8S)-7,8-diammoniononanoate + CO2 + ATP = (4R,5S)-dethiobiotin + ADP + phosphate + 3 H(+). The protein operates within cofactor biosynthesis; biotin biosynthesis; biotin from 7,8-diaminononanoate: step 1/2. In terms of biological role, catalyzes a mechanistically unusual reaction, the ATP-dependent insertion of CO2 between the N7 and N8 nitrogen atoms of 7,8-diaminopelargonic acid (DAPA, also called 7,8-diammoniononanoate) to form a ureido ring. The sequence is that of ATP-dependent dethiobiotin synthetase BioD from Brachyspira hyodysenteriae (strain ATCC 49526 / WA1).